Reading from the N-terminus, the 186-residue chain is Large ribosomal subunit protein uL22 (186 aa).

Composition is skewed to basic and acidic residues over residues 157–167 and 177–186; these read VSKATDDEPTK and RQKEKMLRSE. The tract at residues 157–186 is disordered; the sequence is VSKATDDEPTKKKLSKKKLQRQKEKMLRSE.

The protein belongs to the universal ribosomal protein uL22 family.

This Drosophila yakuba (Fruit fly) protein is Large ribosomal subunit protein uL22 (RpL17).